Reading from the N-terminus, the 319-residue chain is Mas-related G-protein coupled receptor member D (319 aa).

At methionine 1–threonine 30 the chain is on the extracellular side. The helical transmembrane segment at phenylalanine 31–leucine 51 threads the bilayer. Residues serine 52–tyrosine 64 lie on the Cytoplasmic side of the membrane. Residues valine 65 to leucine 85 traverse the membrane as a helical segment. Residues glutamate 86–threonine 92 are Extracellular-facing. The helical transmembrane segment at alanine 93–alanine 113 threads the bilayer. Residues glycine 114–serine 144 are Cytoplasmic-facing. The chain crosses the membrane as a helical span at residues glycine 145–phenylalanine 165. Topologically, residues cysteine 166 to phenylalanine 184 are extracellular. The chain crosses the membrane as a helical span at residues asparagine 185–isoleucine 205. Residues arginine 206–arginine 220 are Cytoplasmic-facing. The chain crosses the membrane as a helical span at residues leucine 221 to isoleucine 241. Residues asparagine 242 to valine 260 are Extracellular-facing. The chain crosses the membrane as a helical span at residues cysteine 261–valine 281. Residues glycine 282–valine 319 lie on the Cytoplasmic side of the membrane.

Belongs to the G-protein coupled receptor 1 family. Mas subfamily. Co-expressed in the small diameter neurons with P2X3 and VR1 in dorsal root ganglia.

Its subcellular location is the cell membrane. Functionally, may regulate nociceptor function and/or development, including the sensation or modulation of pain. Functions as a specific membrane receptor for beta-alanine. The receptor couples with G-protein G(q) and G(i). In Rattus norvegicus (Rat), this protein is Mas-related G-protein coupled receptor member D (Mrgprd).